A 197-amino-acid polypeptide reads, in one-letter code: Protein shisa-4 (197 aa).

The N-terminal stretch at 1–27 (MPPAGLRRAAPLTAIALLVLGAPLVLA) is a signal peptide. The Extracellular segment spans residues 28–87 (GEDCLWYLDRNGSWHPGFNCEFFTFCCGTCYHRYCCRDLTLLITERQQKHCLAFSPKTIA). Residues 88–108 (GIASAVILFVAVVATTICCFL) form a helical membrane-spanning segment. Residues 109 to 197 (CSCCYLYRRR…MPPQPSYPGA (89 aa)) are Cytoplasmic-facing.

This sequence belongs to the shisa family.

The protein resides in the membrane. The protein is Protein shisa-4 (SHISA4) of Homo sapiens (Human).